A 37-amino-acid polypeptide reads, in one-letter code: uncharacterized protein (37 aa).

The segment at 1–37 (MGQVEKARQGQFARPHHSDSQRRVRAWSRIQRRARSF) is disordered. Residues 23 to 37 (RVRAWSRIQRRARSF) show a composition bias toward basic residues.

This is an uncharacterized protein from Bacillus phage phi105 (Bacteriophage phi-105).